A 671-amino-acid chain; its full sequence is Probable serine/threonine-protein kinase DDB_G0286627 (671 aa).

The 253-residue stretch at 31–283 (WVIERQLSKG…SHQLIKHPFF (253 aa)) folds into the Protein kinase domain. ATP contacts are provided by residues 37–45 (LSKGSFGQV) and lysine 61. Aspartate 148 acts as the Proton acceptor in catalysis. A helical membrane pass occupies residues 369-389 (FKIIYLFLILLFLMTILVNLN). Residues 410-523 (PESNPIKKPS…PPVTETPKPT (114 aa)) form a disordered region. A compositionally biased stretch (low complexity) spans 427–490 (NQYSEGSQSS…PTDSSTTDPP (64 aa)). The segment covering 491-513 (VTDPPITDPPITDPPVTDPPITE) has biased composition (pro residues).

Belongs to the protein kinase superfamily. STE Ser/Thr protein kinase family. Mg(2+) serves as cofactor.

Its subcellular location is the membrane. The enzyme catalyses L-seryl-[protein] + ATP = O-phospho-L-seryl-[protein] + ADP + H(+). It catalyses the reaction L-threonyl-[protein] + ATP = O-phospho-L-threonyl-[protein] + ADP + H(+). The protein is Probable serine/threonine-protein kinase DDB_G0286627 of Dictyostelium discoideum (Social amoeba).